A 288-amino-acid polypeptide reads, in one-letter code: 4-diphosphocytidyl-2-C-methyl-D-erythritol kinase (288 aa).

The active site involves lysine 11. 93 to 103 (PFGAGLGGGSS) is a binding site for ATP. Residue aspartate 135 is part of the active site.

Belongs to the GHMP kinase family. IspE subfamily.

It catalyses the reaction 4-CDP-2-C-methyl-D-erythritol + ATP = 4-CDP-2-C-methyl-D-erythritol 2-phosphate + ADP + H(+). It functions in the pathway isoprenoid biosynthesis; isopentenyl diphosphate biosynthesis via DXP pathway; isopentenyl diphosphate from 1-deoxy-D-xylulose 5-phosphate: step 3/6. In terms of biological role, catalyzes the phosphorylation of the position 2 hydroxy group of 4-diphosphocytidyl-2C-methyl-D-erythritol. This is 4-diphosphocytidyl-2-C-methyl-D-erythritol kinase from Chlorobium limicola (strain DSM 245 / NBRC 103803 / 6330).